The sequence spans 247 residues: Adenosylcobinamide-GDP ribazoletransferase (247 aa).

A run of 5 helical transmembrane segments spans residues 34-54 (IVMF…IFIL), 59-79 (CGIP…TGGF), 113-133 (GGLA…ELAL), 138-158 (MLAA…LLMY), and 187-207 (LAVI…AMVV).

This sequence belongs to the CobS family. Mg(2+) serves as cofactor.

It localises to the cell inner membrane. It catalyses the reaction alpha-ribazole + adenosylcob(III)inamide-GDP = adenosylcob(III)alamin + GMP + H(+). It carries out the reaction alpha-ribazole 5'-phosphate + adenosylcob(III)inamide-GDP = adenosylcob(III)alamin 5'-phosphate + GMP + H(+). It participates in cofactor biosynthesis; adenosylcobalamin biosynthesis; adenosylcobalamin from cob(II)yrinate a,c-diamide: step 7/7. Functionally, joins adenosylcobinamide-GDP and alpha-ribazole to generate adenosylcobalamin (Ado-cobalamin). Also synthesizes adenosylcobalamin 5'-phosphate from adenosylcobinamide-GDP and alpha-ribazole 5'-phosphate. In Salmonella choleraesuis (strain SC-B67), this protein is Adenosylcobinamide-GDP ribazoletransferase.